We begin with the raw amino-acid sequence, 337 residues long: Tetraacyldisaccharide 4'-kinase (337 aa).

Residue 51 to 58 (HVGGAGKT) coordinates ATP.

The protein belongs to the LpxK family.

It carries out the reaction a lipid A disaccharide + ATP = a lipid IVA + ADP + H(+). It functions in the pathway glycolipid biosynthesis; lipid IV(A) biosynthesis; lipid IV(A) from (3R)-3-hydroxytetradecanoyl-[acyl-carrier-protein] and UDP-N-acetyl-alpha-D-glucosamine: step 6/6. Transfers the gamma-phosphate of ATP to the 4'-position of a tetraacyldisaccharide 1-phosphate intermediate (termed DS-1-P) to form tetraacyldisaccharide 1,4'-bis-phosphate (lipid IVA). This is Tetraacyldisaccharide 4'-kinase from Afipia carboxidovorans (strain ATCC 49405 / DSM 1227 / KCTC 32145 / OM5) (Oligotropha carboxidovorans).